Consider the following 511-residue polypeptide: 2,3-bisphosphoglycerate-independent phosphoglycerate mutase (511 aa).

Aspartate 12 contacts Mn(2+). Tyrosine 36 bears the Phosphotyrosine mark. Residue serine 62 coordinates Mn(2+). Serine 62 serves as the catalytic Phosphoserine intermediate. Substrate-binding positions include histidine 123, 153-154 (RD), arginine 185, arginine 191, 261-264 (RPDR), and lysine 336. Aspartate 403, histidine 407, aspartate 444, histidine 445, and histidine 462 together coordinate Mn(2+).

It belongs to the BPG-independent phosphoglycerate mutase family. As to quaternary structure, monomer. It depends on Mn(2+) as a cofactor.

The catalysed reaction is (2R)-2-phosphoglycerate = (2R)-3-phosphoglycerate. The protein operates within carbohydrate degradation; glycolysis; pyruvate from D-glyceraldehyde 3-phosphate: step 3/5. Could be inhibited during sporulation by acidification of the forespore, thus allowing accumulation of the spore's large depot of 3-phosphoglyceric acid. In terms of biological role, essential for rapid growth and for sporulation. Catalyzes the interconversion of 2-phosphoglycerate (2-PGA) and 3-phosphoglycerate (3-PGA). The polypeptide is 2,3-bisphosphoglycerate-independent phosphoglycerate mutase (Geobacillus stearothermophilus (Bacillus stearothermophilus)).